Consider the following 339-residue polypeptide: Fructose-1,6-bisphosphatase, cytosolic (339 aa).

Mg(2+) is bound by residues Glu71, Glu100, Asp121, Leu123, and Asp124. Substrate-binding positions include 124 to 127 (DGSS), Asn215, Tyr247, Tyr267, and Lys277. Mg(2+) is bound at residue Glu283.

The protein belongs to the FBPase class 1 family. Requires Mg(2+) as cofactor.

It localises to the cytoplasm. It catalyses the reaction beta-D-fructose 1,6-bisphosphate + H2O = beta-D-fructose 6-phosphate + phosphate. The chain is Fructose-1,6-bisphosphatase, cytosolic from Oryza sativa subsp. indica (Rice).